Reading from the N-terminus, the 61-residue chain is Probable tautomerase stu1128 (61 aa).

The Proton acceptor; via imino nitrogen role is filled by Pro2.

Belongs to the 4-oxalocrotonate tautomerase family.

The polypeptide is Probable tautomerase stu1128 (Streptococcus thermophilus (strain ATCC BAA-250 / LMG 18311)).